A 270-amino-acid polypeptide reads, in one-letter code: Orotidine 5'-phosphate decarboxylase (270 aa).

Substrate-binding positions include Asp-39, 61–63 (KTH), 93–102 (DRKFADIGNT), Tyr-221, and Arg-239. Catalysis depends on Lys-95, which acts as the Proton donor.

The protein belongs to the OMP decarboxylase family.

It carries out the reaction orotidine 5'-phosphate + H(+) = UMP + CO2. It participates in pyrimidine metabolism; UMP biosynthesis via de novo pathway; UMP from orotate: step 2/2. The polypeptide is Orotidine 5'-phosphate decarboxylase (URA3) (Candida albicans (strain SC5314 / ATCC MYA-2876) (Yeast)).